The following is a 276-amino-acid chain: Transmembrane protein 81 (276 aa).

A signal peptide spans 1–24 (MKTSATSFIPGSLVLAFCLPVVAT). Residues 25–225 (SPKTLAIPEK…QHPPWKKKVA (201 aa)) are Extracellular-facing. Residue Asn45 is glycosylated (N-linked (GlcNAc...) asparagine). The 94-residue stretch at 83-176 (TNWLCGMLHF…NLRLVKRLYF (94 aa)) folds into the Ig-like domain. Cysteines 104 and 160 form a disulfide. An N-linked (GlcNAc...) asparagine glycan is attached at Asn211. Residues 226 to 246 (IAVGIGVAGGVTGGVLVSIVL) traverse the membrane as a helical segment. Residues 247–276 (CGRLSVIHSSASLETLQALLPKGGMLRKPD) lie on the Cytoplasmic side of the membrane.

In terms of assembly, forms a complex with IZUMO1 and SPACA6 on spermatocyte cell membrane required for fertilization.

The protein resides in the cell membrane. Essential fertilization factor required for male fertility. Part of a conserved trimeric sperm complex with the essential fertilization factors IZUMO1 and SPACA6 which bridges sperm and oocyte membranes during fertilization by binding to IZUMO1R/JUNO on the oocyte. This Bos taurus (Bovine) protein is Transmembrane protein 81 (TMEM81).